A 174-amino-acid chain; its full sequence is Shikimate kinase 2 (174 aa).

Position 12–17 (Gly12–Thr17) interacts with ATP. The Mg(2+) site is built by Thr16 and Asp32. Substrate-binding residues include Asp34, Arg58, and Gly79. An LID domain region spans residues Gln112–Lys126. Arg120 is a binding site for ATP. Arg139 lines the substrate pocket.

This sequence belongs to the shikimate kinase family. AroL subfamily. In terms of assembly, monomer. Mg(2+) is required as a cofactor.

The protein localises to the cytoplasm. It carries out the reaction shikimate + ATP = 3-phosphoshikimate + ADP + H(+). It participates in metabolic intermediate biosynthesis; chorismate biosynthesis; chorismate from D-erythrose 4-phosphate and phosphoenolpyruvate: step 5/7. In terms of biological role, catalyzes the specific phosphorylation of the 3-hydroxyl group of shikimic acid using ATP as a cosubstrate. This chain is Shikimate kinase 2, found in Shigella boydii serotype 4 (strain Sb227).